Here is a 202-residue protein sequence, read N- to C-terminus: Dephospho-CoA kinase (202 aa).

Residues 6 to 202 (KVSITGDLSS…EYFYALKGAL (197 aa)) enclose the DPCK domain. 14-19 (SSGKTE) is an ATP binding site.

This sequence belongs to the CoaE family.

Its subcellular location is the cytoplasm. It carries out the reaction 3'-dephospho-CoA + ATP = ADP + CoA + H(+). Its pathway is cofactor biosynthesis; coenzyme A biosynthesis; CoA from (R)-pantothenate: step 5/5. In terms of biological role, catalyzes the phosphorylation of the 3'-hydroxyl group of dephosphocoenzyme A to form coenzyme A. The polypeptide is Dephospho-CoA kinase (Chlamydia abortus (strain DSM 27085 / S26/3) (Chlamydophila abortus)).